A 509-amino-acid chain; its full sequence is Transmembrane protein 104 homolog (509 aa).

Over 1-19 (MPRLVNGREAAPTYSNLVG) the chain is Cytoplasmic. The helical transmembrane segment at 20–40 (FIFIFNLIVGTGALTLPGVFA) threads the bilayer. The Extracellular portion of the chain corresponds to 41–45 (RAGWM). The helical transmembrane segment at 46-66 (LSLIVIVLLAIISYMTVTFII) threads the bilayer. At 67–151 (EAMACANAIR…ATLFFNEFGR (85 aa)) the chain is on the cytoplasmic side. The chain crosses the membrane as a helical span at residues 152–172 (VMFYLCLIVYLYGDLSIYSAA). The Extracellular portion of the chain corresponds to 173 to 218 (VARSLRDVVCDQTNGTDTNNLMYWPGDFENNTSLACWKEHTISRLN). N-linked (GlcNAc...) asparagine glycosylation is found at Asn-186, Asn-202, and Asn-203. The chain crosses the membrane as a helical span at residues 219-239 (MYRVLLIGFTLIFGPFVYFNV). Over 240-248 (QKTKYLQML) the chain is Cytoplasmic. Residues 249–269 (TAAFRWMAFTLMICISLKLLI) traverse the membrane as a helical segment. Over 270–277 (SRGAKGHP) the chain is Extracellular. A helical transmembrane segment spans residues 278 to 298 (ATFNVYGIPSLFGACVYSFMC). At 299–320 (HHSLPSLLAPIRHKSMVSKILS) the chain is on the cytoplasmic side. The helical transmembrane segment at 321–341 (IDYIIICAFYILLAMTGIFAF) threads the bilayer. Residues 342 to 361 (ERIEDLYTLDFLPYDVAYVD) are Extracellular-facing. Residues 362–382 (FWSGLLICIDYFLALFPIFTL) form a helical membrane-spanning segment. The Cytoplasmic portion of the chain corresponds to 383–411 (STSFPIVAITLKNNLQSLFLDMSQYESYS). Residues 412–432 (VILRLCFPLLAIIPPFCITYF) traverse the membrane as a helical segment. Topologically, residues 433 to 439 (TESLSSL) are extracellular. A helical transmembrane segment spans residues 440 to 460 (VAFTGTYAGTGIQYIIPVFLV). At 461 to 487 (YFARRTCSELLGSGVVNRFKSPFKSSA) the chain is on the cytoplasmic side. A helical transmembrane segment spans residues 488–508 (WLVFVFIWSILCVCLVSINLF). A topological domain (extracellular) is located at residue Ser-509.

Belongs to the TMEM104 family.

It is found in the membrane. In Drosophila melanogaster (Fruit fly), this protein is Transmembrane protein 104 homolog.